A 340-amino-acid polypeptide reads, in one-letter code: Zinc finger protein 367 (340 aa).

Residues 96-140 (LPTLRGAPPSSASVAAVSGGEDEEEASSPDSGHLKDGIRRGRPRA) form a disordered region. Positions 101–114 (GAPPSSASVAAVSG) are enriched in low complexity. Residues 127–140 (GHLKDGIRRGRPRA) are compositionally biased toward basic and acidic residues. 2 C2H2-type zinc fingers span residues 157 to 179 (IRCNICNRVFPREKSLQAHKRTH) and 185 to 209 (YLCDYPDCGKAFVQSGQLKTHQRLH). Residues 280–317 (KGKLVQKADQEQQDPLEYLQSDEEDDEKSGAQRRLQEQ) form a disordered region. Positions 299–332 (QSDEEDDEKSGAQRRLQEQRERLHGALALIELAN) form a coiled coil. The residue at position 300 (Ser-300) is a Phosphoserine. The segment covering 307-317 (KSGAQRRLQEQ) has biased composition (basic and acidic residues).

This sequence belongs to the krueppel C2H2-type zinc-finger protein family.

Its subcellular location is the nucleus. Transcriptional activator. May be involved in transcriptional activation of erythroid genes. This chain is Zinc finger protein 367 (Znf367), found in Rattus norvegicus (Rat).